We begin with the raw amino-acid sequence, 1481 residues long: Cystic fibrosis transmembrane conductance regulator (1481 aa).

Residues 1-77 (MQRSPLEKAS…KLINALRRCF (77 aa)) are Cytoplasmic-facing. The helical transmembrane segment at 78 to 98 (FWRFMFYGIILYLGEVTKAVQ) threads the bilayer. An ABC transmembrane type-1 1 domain is found at 81–365 (FMFYGIILYL…WAVQTWYDSL (285 aa)). Residues 99-122 (PLLLGRIIASYDPDNEAERSIAIY) lie on the Extracellular side of the membrane. A helical transmembrane segment spans residues 123–146 (LGIGLCLLFIVRTLLLHPAIFGLH). Over 147–195 (HIGMQMRIAMFSLIYKKTLKLSSRVLDKISIGQLVSLLSNNLNKFDEGL) the chain is Cytoplasmic. Residues 196 to 216 (ALAHFVWIAPLQVTLLMGLLW) form a helical membrane-spanning segment. The Extracellular segment spans residues 217–222 (DLLQAS). The chain crosses the membrane as a helical span at residues 223-243 (AFCGLAFLIVLALFQAGLGRM). Over 244–298 (MMKYRDQRAGKINERLVITSEMIENIQSVKAYCWEEAMEKMIENLRQTELKLTRK) the chain is Cytoplasmic. A helical transmembrane segment spans residues 299–319 (AAYVRYFNSSAFFFSGFFVVF). Topologically, residues 320–339 (LSVLPYALIKGIVLRRIFTT) are extracellular. Residues 340–358 (ISFCIVLRMAVTRQFPWAV) traverse the membrane as a helical segment. The Cytoplasmic portion of the chain corresponds to 359–858 (QTWYDSLGAI…YLRYITIHKS (500 aa)). Residues Trp401, Ser433, 457 to 464 (GSTGAGKT), and Gln492 each bind ATP. The ABC transporter 1 domain maps to 422–645 (NGDNSLFFSN…RPDFSSKLMG (224 aa)). Residue Cys523 is the site of S-palmitoyl cysteine attachment. Residues Ser548 and Ser659 each carry the phosphoserine modification. The segment at 653–831 (SAERRNSILT…EEINEDDLKE (179 aa)) is disordered R region. The residue at position 669 (Ser669) is a Phosphoserine; by PKA. At Ser685 the chain carries Phosphoserine. Residue Lys687 forms a Glycyl lysine isopeptide (Lys-Gly) (interchain with G-Cter in ubiquitin) linkage. Residues Ser699 and Ser711 each carry the phosphoserine modification. Position 716 is a phosphothreonine (Thr716). 5 positions are modified to phosphoserine: Ser736, Ser767, Ser790, Ser795, and Ser813. Residues 859–879 (LIFVLIWCLVIFLAEVAASLV) form a helical membrane-spanning segment. Residues 859 to 1155 (LIFVLIWCLV…AVNSSIDVDS (297 aa)) form the ABC transmembrane type-1 2 domain. At 880-918 (VLWLLKETPPQDSGNSTKGANNSYAVIITSTSSYYVFYI) the chain is on the extracellular side. Asn894 and Asn900 each carry an N-linked (GlcNAc...) asparagine glycan. A discontinuously helical transmembrane segment spans residues 919–939 (YVGVADTLLALGLFRGLPLVH). The Cytoplasmic portion of the chain corresponds to 940–990 (TLITVSKILHHKMLHSVLQAPMSTLNTLKAGGILNRFSKDMAILDDLLPLT). The chain crosses the membrane as a helical span at residues 991 to 1011 (IFDFIQLLLIVIGAVAVVSVL). At 1012-1013 (QP) the chain is on the extracellular side. Residues 1014–1034 (YIFLATVPVIAAFIILRAYFL) traverse the membrane as a helical segment. The Cytoplasmic portion of the chain corresponds to 1035-1095 (HTSQQLKQLE…TANWFLYLST (61 aa)). The helical transmembrane segment at 1096 to 1116 (LRWFQMRIEMIFVIFFIAVTF) threads the bilayer. The Extracellular segment spans residues 1117 to 1130 (ISILTTGEGEGTVG). The helical transmembrane segment at 1131–1151 (IILTLAMNIMSTLQWAVNSSI) threads the bilayer. The Cytoplasmic segment spans residues 1152–1481 (DVDSLMRSVS…TEEEVQETRL (330 aa)). Residues 1211 to 1444 (MTVKDLTAKY…KSLFQQAISS (234 aa)) form the ABC transporter 2 domain. Residues Tyr1220 and 1245 to 1252 (GRTGSGKS) contribute to the ATP site. The tract at residues 1387–1481 (RTLKQAFADC…TEEEVQETRL (95 aa)) is interaction with GORASP2. A lipid anchor (S-palmitoyl cysteine) is attached at Cys1396. Residues Ser1445 and Ser1457 each carry the phosphoserine modification. A disordered region spans residues 1449-1481 (KLFPHRNSSKHKSRSKIAALQEETEEEVQETRL). Residues 1451 to 1463 (FPHRNSSKHKSRS) show a composition bias toward basic residues. Over residues 1470-1481 (EETEEEVQETRL) the composition is skewed to acidic residues. A PDZ-binding motif is present at residues 1479 to 1481 (TRL).

Belongs to the ABC transporter superfamily. ABCC family. CFTR transporter (TC 3.A.1.202) subfamily. In terms of assembly, monomer; does not require oligomerization for channel activity. May form oligomers in the membrane. Interacts with SLC26A3, SLC26A6 and NHERF1. Interacts with SHANK2. Interacts with MYO6. Interacts (via C-terminus) with GOPC (via PDZ domain); this promotes CFTR internalization and thereby decreases channel activity. Interacts with SLC4A7 through NHERF1. Found in a complex with MYO5B and RAB11A. Interacts with ANO1. Interacts with SLC26A8. Interacts with AHCYL1; the interaction increases CFTR activity. Interacts with CSE1L. The core-glycosylated form interacts with GORASP2 (via PDZ GRASP-type 1 domain) in respone to ER stress. Interacts with MARCHF2; the interaction leads to CFTR ubiqtuitination and degradation. Interacts with ADGRG2. Post-translationally, N-glycosylated. Phosphorylated; cAMP treatment promotes phosphorylation and activates the channel. Dephosphorylation decreases the ATPase activity (in vitro). Phosphorylation at PKA sites activates the channel. Phosphorylation at PKC sites enhances the response to phosphorylation by PKA. Phosphorylated by AMPK; this inhibits channel activity. In terms of processing, ubiquitinated, leading to its degradation in the lysosome. Deubiquitination by USP10 in early endosomes enhances its endocytic recycling to the cell membrane. Ubiquitinated by RNF185 during ER stress. Ubiquitinated by MARCHF2.

Its subcellular location is the apical cell membrane. It localises to the early endosome membrane. The protein localises to the cell membrane. The protein resides in the recycling endosome membrane. It is found in the endoplasmic reticulum membrane. Its subcellular location is the nucleus. The enzyme catalyses ATP + H2O + closed Cl(-) channel = ADP + phosphate + open Cl(-) channel.. It catalyses the reaction chloride(in) = chloride(out). The catalysed reaction is hydrogencarbonate(in) = hydrogencarbonate(out). It carries out the reaction ATP + H2O = ADP + phosphate + H(+). Its function is as follows. Epithelial ion channel that plays an important role in the regulation of epithelial ion and water transport and fluid homeostasis. Mediates the transport of chloride ions across the cell membrane. Possesses an intrinsic ATPase activity and utilizes ATP to gate its channel; the passive flow of anions through the channel is gated by cycles of ATP binding and hydrolysis by the ATP-binding domains. The ion channel is also permeable to HCO(3)(-); selectivity depends on the extracellular chloride concentration. Exerts its function also by modulating the activity of other ion channels and transporters. Contributes to the regulation of the pH and the ion content of the epithelial fluid layer. Modulates the activity of the epithelial sodium channel (ENaC) complex, in part by regulating the cell surface expression of the ENaC complex. May regulate bicarbonate secretion and salvage in epithelial cells by regulating the transporter SLC4A7. Can inhibit the chloride channel activity of ANO1. Plays a role in the chloride and bicarbonate homeostasis during sperm epididymal maturation and capacitation. The polypeptide is Cystic fibrosis transmembrane conductance regulator (Equus caballus (Horse)).